The primary structure comprises 949 residues: Bifunctional glutamine synthetase adenylyltransferase/adenylyl-removing enzyme (949 aa).

The segment at 1–450 (MQNQGNKVLS…HFNATVGGTD (450 aa)) is adenylyl removase. Residues 455–949 (NDHWTALFWN…IEIYNEILAI (495 aa)) form an adenylyl transferase region.

Belongs to the GlnE family. Mg(2+) is required as a cofactor.

The catalysed reaction is [glutamine synthetase]-O(4)-(5'-adenylyl)-L-tyrosine + phosphate = [glutamine synthetase]-L-tyrosine + ADP. It catalyses the reaction [glutamine synthetase]-L-tyrosine + ATP = [glutamine synthetase]-O(4)-(5'-adenylyl)-L-tyrosine + diphosphate. Its function is as follows. Involved in the regulation of glutamine synthetase GlnA, a key enzyme in the process to assimilate ammonia. When cellular nitrogen levels are high, the C-terminal adenylyl transferase (AT) inactivates GlnA by covalent transfer of an adenylyl group from ATP to specific tyrosine residue of GlnA, thus reducing its activity. Conversely, when nitrogen levels are low, the N-terminal adenylyl removase (AR) activates GlnA by removing the adenylyl group by phosphorolysis, increasing its activity. The regulatory region of GlnE binds the signal transduction protein PII (GlnB) which indicates the nitrogen status of the cell. This chain is Bifunctional glutamine synthetase adenylyltransferase/adenylyl-removing enzyme, found in Shewanella frigidimarina (strain NCIMB 400).